A 296-amino-acid chain; its full sequence is Protoheme IX farnesyltransferase (296 aa).

Residues 1–9 (MMFKQYLQV) are Cytoplasmic-facing. A helical transmembrane segment spans residues 10–28 (TKPGIIFGNLISVIGGFLL). Over 29–37 (ASKGSIDYP) the chain is Periplasmic. Residues 38 to 56 (LFIYTLVGVSLVVASGCVF) form a helical membrane-spanning segment. Over 57–78 (NNYIDRDIDRKMERTKNRVLVK) the chain is Cytoplasmic. The chain crosses the membrane as a helical span at residues 79 to 97 (GLISPAVSLVYATLLGIAG). Topologically, residues 98–107 (FMLLWFGANP) are periplasmic. The chain crosses the membrane as a helical span at residues 108-126 (LACWLGVMGFVVYVGVYSL). At 127–197 (YMKRHSVYGT…YQAANIPVLP (71 aa)) the chain is on the cytoplasmic side. The chain crosses the membrane as a helical span at residues 198 to 216 (VVKGISVAKNHITLYIIAF). Topologically, residues 217-228 (AVATLMLSLGGY) are periplasmic. A helical transmembrane segment spans residues 229-247 (AGYKYLVVAAAVSVWWLGM). The Cytoplasmic portion of the chain corresponds to 248-268 (ALRGYKVADDRIWARKLFGFS). A helical membrane pass occupies residues 269-287 (IIAITALSVMMSVDFMVPD). Topologically, residues 288 to 296 (SHTLLAAVW) are periplasmic.

Belongs to the UbiA prenyltransferase family. Protoheme IX farnesyltransferase subfamily.

It is found in the cell inner membrane. It carries out the reaction heme b + (2E,6E)-farnesyl diphosphate + H2O = Fe(II)-heme o + diphosphate. The protein operates within porphyrin-containing compound metabolism; heme O biosynthesis; heme O from protoheme: step 1/1. Its function is as follows. Converts heme B (protoheme IX) to heme O by substitution of the vinyl group on carbon 2 of heme B porphyrin ring with a hydroxyethyl farnesyl side group. In Escherichia coli O139:H28 (strain E24377A / ETEC), this protein is Protoheme IX farnesyltransferase.